Here is a 394-residue protein sequence, read N- to C-terminus: Teichoic acid poly(glycerol phosphate) polymerase (394 aa).

It belongs to the CDP-glycerol glycerophosphotransferase family.

Its subcellular location is the cell membrane. It carries out the reaction 4-O-[(2R)-glycerylphospho]-N-acetyl-beta-D-mannosaminyl-(1-&gt;4)-N-acetyl-alpha-D-glucosaminyl di-trans,octa-cis-undecaprenyl diphosphate + n CDP-glycerol = 4-O-{[(2R)-1-glycerylphospho](n)-(2R)-1-glycerylphospho}-N-acetyl-beta-D-mannosaminyl-(1-&gt;4)-N-acetyl-alpha-D-glucosaminyl undecaprenyl diphosphate + n CMP + n H(+). Catalyzes the addition of further 2-8 glycerol phosphate units from CDP-glycerol to the single glycerol phosphate unit bound to the prenolpyrophosphate-linked disaccharide. The function in the cell is unknown since the product is not part of the poly(ribitol phosphate) teichoic acid found in the cell walls. In Bacillus spizizenii (strain ATCC 23059 / NRRL B-14472 / W23) (Bacillus subtilis subsp. spizizenii), this protein is Teichoic acid poly(glycerol phosphate) polymerase (tarF).